Here is a 193-residue protein sequence, read N- to C-terminus: Cytochrome c biogenesis ATP-binding export protein CcmA (193 aa).

In terms of domain architecture, ABC transporter spans 9-191 (LSASGLAILR…AAGFPVTAEV (183 aa)). Residue 41-48 (GANGAGKT) participates in ATP binding.

Belongs to the ABC transporter superfamily. CcmA exporter (TC 3.A.1.107) family. In terms of assembly, the complex is composed of two ATP-binding proteins (CcmA) and two transmembrane proteins (CcmB).

Its subcellular location is the cell inner membrane. The enzyme catalyses heme b(in) + ATP + H2O = heme b(out) + ADP + phosphate + H(+). Functionally, part of the ABC transporter complex CcmAB involved in the biogenesis of c-type cytochromes; once thought to export heme, this seems not to be the case, but its exact role is uncertain. Responsible for energy coupling to the transport system. This chain is Cytochrome c biogenesis ATP-binding export protein CcmA, found in Hyphomonas neptunium (strain ATCC 15444).